The primary structure comprises 447 residues: Methylenetetrahydrofolate--tRNA-(uracil-5-)-methyltransferase TrmFO (447 aa).

9-14 lines the FAD pocket; that stretch reads GGGLAG.

It belongs to the MnmG family. TrmFO subfamily. Requires FAD as cofactor.

The protein resides in the cytoplasm. The enzyme catalyses uridine(54) in tRNA + (6R)-5,10-methylene-5,6,7,8-tetrahydrofolate + NADH + H(+) = 5-methyluridine(54) in tRNA + (6S)-5,6,7,8-tetrahydrofolate + NAD(+). It carries out the reaction uridine(54) in tRNA + (6R)-5,10-methylene-5,6,7,8-tetrahydrofolate + NADPH + H(+) = 5-methyluridine(54) in tRNA + (6S)-5,6,7,8-tetrahydrofolate + NADP(+). Its function is as follows. Catalyzes the folate-dependent formation of 5-methyl-uridine at position 54 (M-5-U54) in all tRNAs. The sequence is that of Methylenetetrahydrofolate--tRNA-(uracil-5-)-methyltransferase TrmFO from Paramagnetospirillum magneticum (strain ATCC 700264 / AMB-1) (Magnetospirillum magneticum).